Here is a 304-residue protein sequence, read N- to C-terminus: Oxygen-dependent coproporphyrinogen-III oxidase (304 aa).

Residue Ser-94 participates in substrate binding. A divalent metal cation-binding residues include His-98 and His-108. His-108 acts as the Proton donor in catalysis. Residue 110 to 112 coordinates substrate; sequence NVR. The a divalent metal cation site is built by His-147 and His-177. Residues 242–277 are important for dimerization; the sequence is YVEFNLVYDRGTLFGLQSGGRTESILMSLPPVAHWR. Residue 260 to 262 participates in substrate binding; the sequence is GGR.

It belongs to the aerobic coproporphyrinogen-III oxidase family. Homodimer. The cofactor is a divalent metal cation.

It is found in the cytoplasm. It carries out the reaction coproporphyrinogen III + O2 + 2 H(+) = protoporphyrinogen IX + 2 CO2 + 2 H2O. It participates in porphyrin-containing compound metabolism; protoporphyrin-IX biosynthesis; protoporphyrinogen-IX from coproporphyrinogen-III (O2 route): step 1/1. In terms of biological role, involved in the heme biosynthesis. Catalyzes the aerobic oxidative decarboxylation of propionate groups of rings A and B of coproporphyrinogen-III to yield the vinyl groups in protoporphyrinogen-IX. The polypeptide is Oxygen-dependent coproporphyrinogen-III oxidase (Methylococcus capsulatus (strain ATCC 33009 / NCIMB 11132 / Bath)).